A 639-amino-acid polypeptide reads, in one-letter code: 3D-(3,5/4)-trihydroxycyclohexane-1,2-dione hydrolase (639 aa).

Glu-62 is a binding site for thiamine diphosphate. Residues 438-518 are thiamine pyrophosphate binding; that stretch reads SLPGDLQRMW…INILLFDNCG (81 aa). Asp-489 and Asn-516 together coordinate Mg(2+).

It belongs to the TPP enzyme family. Mg(2+) serves as cofactor. The cofactor is thiamine diphosphate.

It carries out the reaction 3D-3,5/4-trihydroxycyclohexane-1,2-dione + H2O = 5-deoxy-D-glucuronate + H(+). Its pathway is polyol metabolism; myo-inositol degradation into acetyl-CoA; acetyl-CoA from myo-inositol: step 3/7. Its function is as follows. Involved in the cleavage of the C1-C2 bond of 3D-(3,5/4)-trihydroxycyclohexane-1,2-dione (THcHDO) to yield 5-deoxy-glucuronate (5DG). The chain is 3D-(3,5/4)-trihydroxycyclohexane-1,2-dione hydrolase from Clostridium perfringens (strain ATCC 13124 / DSM 756 / JCM 1290 / NCIMB 6125 / NCTC 8237 / Type A).